Consider the following 689-residue polypeptide: Dipeptidyl aminopeptidase BIII (689 aa).

The first 26 residues, 1–26 (MRHPAFRLTLLASTVAFALAPQAAQA), serve as a signal peptide directing secretion. Active-site charge relay system residues include Ser-506, Asp-593, and His-625.

It belongs to the peptidase S9C family. In terms of assembly, monomer.

Strongly inhibited by the serine protease inhibitor diisopropyl fluorophosphate (DFP), chymostatin, leupeptin, 0.5 mM ZnCl(2), 10 mM o-phenanthlorine and N-tosyl-L-phenyl-alanyl chloromethyl ketone (TPCK), but not by N-tosyl-L-lysyl chloromethyl ketone (TLCK). Activity is not affected significantly by iodoacetate (IAA), L-trans-epoxysuccinyl-leucylamido(4-guanido)butane (E64), pepstatin A and phenylmethanesulfonyl fluoride (PMSF). Activity is stimulated by addition of 0.5 mM CaCl(2), 10 mM EDTA and N-ethylmaleimide (NEM). Functionally, exopeptidase that catalyzes the removal of dipeptide units (NH2-P2-P1- or -P1'-P2'-COOH) from the free amino or carboxy termini. Prefers substrates composed of bulky, hydrophobic amino acids at P1 and P1' positions. Has endopeptidase activity on N-terminally blocked peptide derivatives which contain aromatic amino acid residue at the P1 position. Exopeptidase activity is much higher than its endopeptidase activity. In Pseudoxanthomonas mexicana, this protein is Dipeptidyl aminopeptidase BIII.